The chain runs to 586 residues: Estrogen receptor (586 aa).

The interval 1–179 (MTMPLPNKTT…SMESTKETRY (179 aa)) is modulating. The interval 144-173 (FYRSSSDNRRQSGRERMSSANDKGPPSMES) is disordered. The span at 149-160 (SDNRRQSGRERM) shows a compositional bias: basic and acidic residues. 2 NR C4-type zinc fingers span residues 180–200 (CAVC…CEGC) and 216–240 (CPAT…LRKC). A DNA-binding region (nuclear receptor) is located at residues 180–245 (CAVCSDYASG…RLRKCYEVGM (66 aa)). Positions 246–302 (MKGGIRKDRRGGRLLKHKRQKEEQEQKNDVDPSEIRTASIWVNPSVKSMKLSPVLSL) are hinge. Residues 252-264 (KDRRGGRLLKHKR) are compositionally biased toward basic residues. A disordered region spans residues 252–276 (KDRRGGRLLKHKRQKEEQEQKNDVD). Positions 265 to 276 (QKEEQEQKNDVD) are enriched in basic and acidic residues. Residues 303–539 (TAEQLISALM…DLLLEMLDAH (237 aa)) enclose the NR LBD domain. The segment covering 543 to 556 (TPKDKTTTQEEDSR) has biased composition (basic and acidic residues). Residues 543 to 569 (TPKDKTTTQEEDSRSPPTTTVNGASPC) form a disordered region.

The protein belongs to the nuclear hormone receptor family. NR3 subfamily. As to quaternary structure, binds DNA as a homodimer. Can form a heterodimer with ER-beta.

It localises to the nucleus. Functionally, the steroid hormones and their receptors are involved in the regulation of eukaryotic gene expression and affect cellular proliferation and differentiation in target tissues. This chain is Estrogen receptor (esr1), found in Xenopus laevis (African clawed frog).